Reading from the N-terminus, the 232-residue chain is MDVPADSHIKYEDAIDYWTDVDATVDGVLGGYGEGTVVPTMDVLGSNNFLRKLKSRMLPQENNVKYAVDIGAGIGRVSKTMLHKHAAKIDLVEPVKPFIEQMHVELAELKDKGQIGQIYEVGMQDWTPDAGKYWLIWCQWCVGHLPDAELVAFLKRCIVGLQPNGTIVVKENNTPTDTDDFDETDSSVTRSDAKFRQIFEEAGLKLIASERQRGLPRELYPVRMYALKPMPN.

Residues G71, R76, 123–124 (MQ), and Q139 each bind S-adenosyl-L-methionine.

Belongs to the methyltransferase superfamily. NTM1 family.

It is found in the cytoplasm. It carries out the reaction N-terminal L-alanyl-L-prolyl-L-lysyl-[protein] + 3 S-adenosyl-L-methionine = N-terminal N,N,N-trimethyl-L-alanyl-L-prolyl-L-lysyl-[protein] + 3 S-adenosyl-L-homocysteine + 3 H(+). The enzyme catalyses N-terminal L-seryl-L-prolyl-L-lysyl-[protein] + 3 S-adenosyl-L-methionine = N-terminal N,N,N-trimethyl-L-seryl-L-prolyl-L-lysyl-[protein] + 3 S-adenosyl-L-homocysteine + 3 H(+). It catalyses the reaction N-terminal L-prolyl-L-prolyl-L-lysyl-[protein] + 2 S-adenosyl-L-methionine = N-terminal N,N-dimethyl-L-prolyl-L-prolyl-L-lysyl-[protein] + 2 S-adenosyl-L-homocysteine + 2 H(+). In terms of biological role, alpha-N-methyltransferase that methylates the N-terminus of target proteins containing the N-terminal motif [Ala/Pro/Ser]-Pro-Lys when the initiator Met is cleaved. Specifically catalyzes mono-, di- or tri-methylation of exposed alpha-amino group of Ala or Ser residue in the [Ala/Ser]-Pro-Lys motif and mono- or di-methylation of Pro in the Pro-Pro-Lys motif. Responsible for the N-terminal methylation of the ribosomal proteins RPL12A, RPL12B, RPS25A and RPS25B. This chain is Alpha N-terminal protein methyltransferase 1 (TAE1), found in Saccharomyces cerevisiae (strain ATCC 204508 / S288c) (Baker's yeast).